We begin with the raw amino-acid sequence, 357 residues long: Aurora kinase A- and ninein-interacting protein (357 aa).

A compositionally biased stretch (polar residues) spans 71–91; the sequence is LQPGKTNGSDQKSVSSHTESQ. The segment at 71 to 98 is disordered; the sequence is LQPGKTNGSDQKSVSSHTESQINKESKK. Residues 187–357 form an interaction with AURKA region; it reads RKEEKGDSAR…EGNQVIRHQF (171 aa). A phosphoserine mark is found at Ser-267 and Ser-292. The tract at residues 281–357 is interaction with RBBP8/CtIP; sequence KDSWSQLFTE…EGNQVIRHQF (77 aa).

This sequence belongs to the AUNIP family. In terms of assembly, interacts (via C-terminus) with AURKA (via C-terminus). Interacts (via N-terminus) with NIN; this interaction blocks NIN phosphorylation by both AURKA and GSK3B. Identified in a complex with NIN and AURKA. Interacts with RBBP8/CtIP. As to expression, expressed in heart, skeletal muscles, placenta and testis.

Its subcellular location is the nucleus. The protein localises to the chromosome. The protein resides in the cytoplasm. It is found in the cytoskeleton. It localises to the microtubule organizing center. Its subcellular location is the centrosome. The protein localises to the spindle pole. Functionally, DNA-binding protein that accumulates at DNA double-strand breaks (DSBs) following DNA damage and promotes DNA resection and homologous recombination. Serves as a sensor of DNA damage: binds DNA with a strong preference for DNA substrates that mimic structures generated at stalled replication forks, and anchors RBBP8/CtIP to DSB sites to promote DNA end resection and ensuing homologous recombination repair. Inhibits non-homologous end joining (NHEJ). Required for the dynamic movement of AURKA at the centrosomes and spindle apparatus during the cell cycle. This Homo sapiens (Human) protein is Aurora kinase A- and ninein-interacting protein.